Here is a 344-residue protein sequence, read N- to C-terminus: Ubiquitin-associated domain-containing protein 2 (344 aa).

Residues 1 to 35 (MFTSTGSSGLYKAPLSKSLLLVPSALSLLLALLLP) form the signal peptide. Topologically, residues 36–91 (HCQKLFVYDLHAVKNDFQIWRLICGRIICLDLKDTFCSSLLIYNFRIFERRYGSRK) are extracellular. Residues 92–112 (FASFLLGSWVLSALFDFLLIE) form a helical membrane-spanning segment. Residues 113–125 (AMQYFFGITAASN) lie on the Cytoplasmic side of the membrane. The chain crosses the membrane as a helical span at residues 126 to 146 (LPSGFLAPVFALFVPFYCSIP). Residues 147–163 (RVQVAQILGPLSITNKT) lie on the Extracellular side of the membrane. An N-linked (GlcNAc...) asparagine glycan is attached at asparagine 161. The helical transmembrane segment at 164–184 (LIYILGLQLFTSGSYIWIVAI) threads the bilayer. The Cytoplasmic segment spans residues 185–344 (SGLMSGLCYD…NVATNFLLQH (160 aa)). The UBA domain occupies 304–344 (EVSEEQVARLMEMGFSRGDALEALRASNNDLNVATNFLLQH).

Interacts with FAF2. Interacts with LMBR1L. Interacts with AMFR and VCP.

The protein localises to the endoplasmic reticulum membrane. Functionally, restricts trafficking of FAF2 from the endoplasmic reticulum to lipid droplets. In association with LMBR1L and E3 ubiquitin-protein ligase AMFR, negatively regulates the canonical Wnt signaling pathway in the lymphocytes by promoting the ubiquitin-mediated degradation of CTNNB1 and Wnt receptors FZD6 and LRP6. The sequence is that of Ubiquitin-associated domain-containing protein 2 (UBAC2) from Homo sapiens (Human).